Here is a 155-residue protein sequence, read N- to C-terminus: SsrA-binding protein (155 aa).

This sequence belongs to the SmpB family.

The protein resides in the cytoplasm. Required for rescue of stalled ribosomes mediated by trans-translation. Binds to transfer-messenger RNA (tmRNA), required for stable association of tmRNA with ribosomes. tmRNA and SmpB together mimic tRNA shape, replacing the anticodon stem-loop with SmpB. tmRNA is encoded by the ssrA gene; the 2 termini fold to resemble tRNA(Ala) and it encodes a 'tag peptide', a short internal open reading frame. During trans-translation Ala-aminoacylated tmRNA acts like a tRNA, entering the A-site of stalled ribosomes, displacing the stalled mRNA. The ribosome then switches to translate the ORF on the tmRNA; the nascent peptide is terminated with the 'tag peptide' encoded by the tmRNA and targeted for degradation. The ribosome is freed to recommence translation, which seems to be the essential function of trans-translation. This is SsrA-binding protein from Streptococcus agalactiae serotype Ia (strain ATCC 27591 / A909 / CDC SS700).